The chain runs to 89 residues: Elongation factor 1-beta (89 aa).

This sequence belongs to the EF-1-beta/EF-1-delta family.

Its function is as follows. Promotes the exchange of GDP for GTP in EF-1-alpha/GDP, thus allowing the regeneration of EF-1-alpha/GTP that could then be used to form the ternary complex EF-1-alpha/GTP/AAtRNA. This chain is Elongation factor 1-beta, found in Methanococcus maripaludis (strain C7 / ATCC BAA-1331).